We begin with the raw amino-acid sequence, 136 residues long: Large ribosomal subunit protein bL17 (136 aa).

It belongs to the bacterial ribosomal protein bL17 family. As to quaternary structure, part of the 50S ribosomal subunit. Contacts protein L32.

This is Large ribosomal subunit protein bL17 from Rhodopseudomonas palustris (strain BisA53).